The following is a 63-amino-acid chain: Large ribosomal subunit protein uL30 (63 aa).

It belongs to the universal ribosomal protein uL30 family. Part of the 50S ribosomal subunit.

This chain is Large ribosomal subunit protein uL30, found in Hahella chejuensis (strain KCTC 2396).